The sequence spans 104 residues: MAGRGKVGKGYGKVGAKRHTKKSLKETIMGITKPAIRRLARRGGVKRISSLIYEETRNVLRSFLENVIRDSVTYTEHAKRKTVTALDVVYALKRQGRTLYGFGG.

The tract at residues 1–21 (MAGRGKVGKGYGKVGAKRHTK) is disordered.

This sequence belongs to the histone H4 family. As to quaternary structure, the nucleosome is a histone octamer containing two molecules each of H2A, H2B, H3 and H4 assembled in one H3-H4 heterotetramer and two H2A-H2B heterodimers. The octamer wraps approximately 147 bp of DNA.

Its subcellular location is the nucleus. It is found in the chromosome. Core component of nucleosome. Nucleosomes wrap and compact DNA into chromatin, limiting DNA accessibility to the cellular machineries which require DNA as a template. Histones thereby play a central role in transcription regulation, DNA repair, DNA replication and chromosomal stability. DNA accessibility is regulated via a complex set of post-translational modifications of histones, also called histone code, and nucleosome remodeling. This is Histone H4 from Sterkiella nova (Ciliate).